The following is a 979-amino-acid chain: Peptidyl-glycine alpha-amidating monooxygenase (979 aa).

Positions 1-24 (MAGRARSRLLLLLGLLALQSSCLA) are cleaved as a signal peptide. The segment at 1-497 (MAGRARSRLL…EGPWEPELAG (497 aa)) is peptidylglycine alpha-hydroxylating monooxygenase. Residues 25–34 (FRSPLSVFKR) constitute a propeptide that is removed on maturation. The Intragranular segment spans residues 35-869 (FKETTRSFSN…KKLIKDPGSG (835 aa)). 5 disulfide bridges follow: Cys-46–Cys-185, Cys-80–Cys-125, Cys-113–Cys-130, Cys-226–Cys-333, and Cys-292–Cys-314. Residues His-106 and His-107 each coordinate Cu(2+). The Cu(2+) site is built by His-171, His-241, His-243, and Met-313. Residues 498 to 823 (DFHVEEALEW…SRLEVEHRSV (326 aa)) are peptidyl-alpha-hydroxyglycine alpha-amidating lyase. NHL repeat units follow at residues 501–544 (VEEA…NSFD), 570–611 (AEIL…LEPR), 620–665 (LGRS…FSPS), and 673–717 (GEES…FKTD). Residue Val-520 participates in Ca(2+) binding. Arg-533 is a binding site for a protein. His-585 serves as a coordination point for Zn(2+). A Ca(2+)-binding site is contributed by Leu-587. An intrachain disulfide couples Cys-634 to Cys-655. An a protein-binding site is contributed by Tyr-654. His-690 provides a ligand contact to Zn(2+). An intrachain disulfide couples Cys-702 to Cys-713. Arg-706 provides a ligand contact to a protein. N-linked (GlcNAc...) asparagine glycosylation occurs at Asn-765. The NHL 5 repeat unit spans residues 769–812 (GEIIDVFKPVRKHFDMPHDIVASEDGTVYIGDAHTNTVWKFTLT). Residue His-786 participates in Zn(2+) binding. Asp-787 provides a ligand contact to Ca(2+). The chain crosses the membrane as a helical span at residues 870–893 (VPVVLITTLLVIPVVVLLAIAMFI). Residues 894–979 (RWKKSRAFGD…APLPTPAPSS (86 aa)) lie on the Cytoplasmic side of the membrane. Phosphoserine occurs at positions 924, 925, 935, and 948. Positions 931–948 (NFFASRKGYSRKGFDRVS) are interaction with RASSF9. The disordered stretch occupies residues 943–979 (GFDRVSTEGSDQEKDEDDGSESEEEYSAPLPTPAPSS). Thr-949 is modified (phosphothreonine). Ser-952 carries the phosphoserine; by UHMK1 modification. Positions 955 to 968 (EKDEDDGSESEEEY) are enriched in acidic residues. At Ser-964 the chain carries Phosphoserine.

It in the C-terminal section; belongs to the peptidyl-alpha-hydroxyglycine alpha-amidating lyase family. In the N-terminal section; belongs to the copper type II ascorbate-dependent monooxygenase family. In terms of assembly, monomer. Interacts with RASSF9. Zn(2+) serves as cofactor. It depends on Cu(2+) as a cofactor.

It localises to the cytoplasmic vesicle. Its subcellular location is the secretory vesicle membrane. It carries out the reaction a [peptide]-C-terminal glycine + 2 L-ascorbate + O2 = a [peptide]-C-terminal (2S)-2-hydroxyglycine + 2 monodehydro-L-ascorbate radical + H2O. The catalysed reaction is a [peptide]-C-terminal (2S)-2-hydroxyglycine = a [peptide]-C-terminal amide + glyoxylate. It catalyses the reaction N-dodecanoylglycine + 2 L-ascorbate + O2 = N-dodecanoyl-(2S)-hydroxyglycine + 2 monodehydro-L-ascorbate radical + H2O. The enzyme catalyses N-dodecanoyl-(2S)-hydroxyglycine = dodecanamide + glyoxylate. It carries out the reaction N-(9Z,12Z,15Z)-octadecatrienoylglycine + 2 L-ascorbate + O2 = N-(9Z,12Z,15Z)-octadecatrienoyl-(2S)-hydroxyglycine + 2 monodehydro-L-ascorbate radical + H2O. The catalysed reaction is N-(9Z,12Z,15Z)-octadecatrienoyl-(2S)-hydroxyglycine = (9Z,12Z,15Z)-octadecatrienamide + glyoxylate. It catalyses the reaction N-(9Z-octadecenoyl)glycine + 2 L-ascorbate + O2 = N-(9Z-octadecenoyl)-(2S)-hydroxyglycine + 2 monodehydro-L-ascorbate radical + H2O. The enzyme catalyses N-(9Z-octadecenoyl)-(2S)-hydroxyglycine = (9Z)-octadecenamide + glyoxylate. It carries out the reaction N-tetradecanoylglycine + 2 L-ascorbate + O2 = N-tetradecanoyl-(2S)-hydroxyglycine + 2 monodehydro-L-ascorbate radical + H2O. The catalysed reaction is N-tetradecanoyl-(2S)-hydroxyglycine = tetradecamide + glyoxylate. It catalyses the reaction N-decanoylglycine + 2 L-ascorbate + O2 = N-decanoyl-(2S)-hydroxyglycine + 2 monodehydro-L-ascorbate radical + H2O. The enzyme catalyses N-decanoyl-(2S)-hydroxyglycine = decanamide + glyoxylate. It carries out the reaction N-octanoylglycine + 2 L-ascorbate + O2 = N-octanoyl-(2S)-hydroxyglycine + 2 monodehydro-L-ascorbate radical + H2O. The catalysed reaction is N-octanoyl-(2S)-hydroxyglycine = octanamide + glyoxylate. PAM activity is inhibited by EDTA, phenylglyoxal and diethyl pyrocarbonate. PAL activity is stimulated by cadmium and inhibited by mercury. Its function is as follows. Bifunctional enzyme that catalyzes amidation of the C-terminus of proteins. Alpha-amidation is present at the C-terminus of many endocrine hormones and neuropeptides and is required for their activity. C-terminal amidation also takes place in response to protein fragmentation triggered by oxidative stress, promoting degradation of amidated protein fragments by the proteasome. Alpha-amidation involves two sequential reactions, both of which are catalyzed by separate catalytic domains of the enzyme. The first step, catalyzed by peptidyl alpha-hydroxylating monooxygenase (PHM) domain, is the copper-, ascorbate-, and O2- dependent stereospecific hydroxylation (with S stereochemistry) at the alpha-carbon (C-alpha) of the C-terminal glycine of the peptidylglycine substrate. The second step, catalyzed by the peptidylglycine amidoglycolate lyase (PAL) domain, is the zinc-dependent cleavage of the N-C-alpha bond, producing the alpha-amidated peptide and glyoxylate. Similarly, catalyzes the two-step conversion of an N-fatty acylglycine to a primary fatty acid amide and glyoxylate. This Mus musculus (Mouse) protein is Peptidyl-glycine alpha-amidating monooxygenase.